A 425-amino-acid polypeptide reads, in one-letter code: Enolase (425 aa).

Residue Gln163 participates in (2R)-2-phosphoglycerate binding. The Proton donor role is filled by Glu205. Mg(2+)-binding residues include Asp242, Glu286, and Asp313. Positions 338, 367, 368, and 389 each coordinate (2R)-2-phosphoglycerate. The Proton acceptor role is filled by Lys338.

The protein belongs to the enolase family. Mg(2+) serves as cofactor.

It localises to the cytoplasm. Its subcellular location is the secreted. The protein localises to the cell surface. It catalyses the reaction (2R)-2-phosphoglycerate = phosphoenolpyruvate + H2O. Its pathway is carbohydrate degradation; glycolysis; pyruvate from D-glyceraldehyde 3-phosphate: step 4/5. Functionally, catalyzes the reversible conversion of 2-phosphoglycerate (2-PG) into phosphoenolpyruvate (PEP). It is essential for the degradation of carbohydrates via glycolysis. The protein is Enolase of Helicobacter hepaticus (strain ATCC 51449 / 3B1).